We begin with the raw amino-acid sequence, 310 residues long: ADP-L-glycero-D-manno-heptose-6-epimerase (310 aa).

Residues Phe-10–Ile-11, Asp-31–Asn-32, Lys-38, Lys-53, Glu-75–Ser-79, and Asn-92 contribute to the NADP(+) site. Tyr-140 acts as the Proton acceptor in catalysis. Lys-144 serves as a coordination point for NADP(+). A substrate-binding site is contributed by Asn-169. Val-170 and Lys-178 together coordinate NADP(+). Lys-178 acts as the Proton acceptor in catalysis. Residues Ser-180, His-187, Phe-201–Ser-204, Arg-209, and Tyr-272 each bind substrate.

The protein belongs to the NAD(P)-dependent epimerase/dehydratase family. HldD subfamily. Homopentamer. Requires NADP(+) as cofactor.

It carries out the reaction ADP-D-glycero-beta-D-manno-heptose = ADP-L-glycero-beta-D-manno-heptose. It participates in nucleotide-sugar biosynthesis; ADP-L-glycero-beta-D-manno-heptose biosynthesis; ADP-L-glycero-beta-D-manno-heptose from D-glycero-beta-D-manno-heptose 7-phosphate: step 4/4. Its function is as follows. Catalyzes the interconversion between ADP-D-glycero-beta-D-manno-heptose and ADP-L-glycero-beta-D-manno-heptose via an epimerization at carbon 6 of the heptose. In Pectobacterium atrosepticum (strain SCRI 1043 / ATCC BAA-672) (Erwinia carotovora subsp. atroseptica), this protein is ADP-L-glycero-D-manno-heptose-6-epimerase.